We begin with the raw amino-acid sequence, 76 residues long: Acyl carrier protein (76 aa).

The Carrier domain maps to Met-1–Gln-76. Position 36 is an O-(pantetheine 4'-phosphoryl)serine (Ser-36).

This sequence belongs to the acyl carrier protein (ACP) family. Post-translationally, 4'-phosphopantetheine is transferred from CoA to a specific serine of apo-ACP by AcpS. This modification is essential for activity because fatty acids are bound in thioester linkage to the sulfhydryl of the prosthetic group.

Its subcellular location is the cytoplasm. The protein operates within lipid metabolism; fatty acid biosynthesis. Its function is as follows. Carrier of the growing fatty acid chain in fatty acid biosynthesis. The chain is Acyl carrier protein from Pasteurella multocida (strain Pm70).